Here is a 922-residue protein sequence, read N- to C-terminus: Histidine kinase 5 (922 aa).

Coiled coils occupy residues 86–120 and 169–205; these read MQDN…EEYK and KQKA…SQSA. Residues 373–614 form the Histidine kinase domain; sequence TMSHEIRSPL…TFTFILPYKV (242 aa). The residue at position 376 (His376) is a Phosphohistidine; by autocatalysis. Disordered stretches follow at residues 620–639 and 728–773; these read YSDD…EPDD and NGRC…TEVK. The span at 738 to 747 shows a compositional bias: low complexity; the sequence is SCSSSQASSE. Residues 761 to 773 are compositionally biased toward basic and acidic residues; sequence SHREEEKAETEVK. The Response regulatory domain maps to 779–921; sequence KILLVEDNKI…KLRECLQQYL (143 aa). Mg(2+)-binding residues include Asp785, Asp828, and Cys830. Residue Asp828 is modified to 4-aspartylphosphate.

In terms of assembly, interacts with AHP1, APH2, APH3, APH5 and APH6, but not with APH4. As to expression, present in light-grown but not in etiolated seedlings. Mostly expressed in roots flowers and siliques, and, to a lower extent, in stems and leaves, especially in guard cells.

Its subcellular location is the cell membrane. It is found in the cytoplasm. It catalyses the reaction ATP + protein L-histidine = ADP + protein N-phospho-L-histidine.. In terms of biological role, functions as a histidine kinase and transmits the stress signal to a downstream MAPK cascade. This protein undergoes an ATP-dependent autophosphorylation at a conserved histidine residue in the kinase core, and a phosphoryl group is then transferred to a conserved aspartate residue in the receiver domain. Negative regulator of the ETR1-dependent abscisic acid (ABA) and ethylene signaling pathway that inhibits the root elongation. Promotes stomatal closure. Regulates stomatal opening by integrating multiple signals via hydrogen peroxide H(2)O(2) homeostasis in guard cells in an ABA-independent manner. May contribute to basal defense mechanisms by closing stomata in the presence of bacterial pathogens. Regulates both hormone levels and ROS production in response to stress. Required for full immunity to bacterial pathogen and necrotrophic fungus. This chain is Histidine kinase 5 (AHK5), found in Arabidopsis thaliana (Mouse-ear cress).